Here is a 359-residue protein sequence, read N- to C-terminus: Histidinol-phosphate aminotransferase (359 aa).

Lys-217 bears the N6-(pyridoxal phosphate)lysine mark.

The protein belongs to the class-II pyridoxal-phosphate-dependent aminotransferase family. Histidinol-phosphate aminotransferase subfamily. As to quaternary structure, homodimer. Pyridoxal 5'-phosphate is required as a cofactor.

It carries out the reaction L-histidinol phosphate + 2-oxoglutarate = 3-(imidazol-4-yl)-2-oxopropyl phosphate + L-glutamate. It functions in the pathway amino-acid biosynthesis; L-histidine biosynthesis; L-histidine from 5-phospho-alpha-D-ribose 1-diphosphate: step 7/9. This Salmonella newport (strain SL254) protein is Histidinol-phosphate aminotransferase.